The sequence spans 135 residues: DNA-directed RNA polymerase subunit omega (135 aa).

The protein belongs to the RNA polymerase subunit omega family. In terms of assembly, the RNAP catalytic core consists of 2 alpha, 1 beta, 1 beta' and 1 omega subunit. When a sigma factor is associated with the core the holoenzyme is formed, which can initiate transcription.

The enzyme catalyses RNA(n) + a ribonucleoside 5'-triphosphate = RNA(n+1) + diphosphate. Its function is as follows. Promotes RNA polymerase assembly. Latches the N- and C-terminal regions of the beta' subunit thereby facilitating its interaction with the beta and alpha subunits. This Rhizobium meliloti (strain 1021) (Ensifer meliloti) protein is DNA-directed RNA polymerase subunit omega.